A 1069-amino-acid polypeptide reads, in one-letter code: Cellulose synthase A catalytic subunit 5 [UDP-forming] (1069 aa).

At Met-1 the chain carries N-acetylmethionine. The Cytoplasmic portion of the chain corresponds to 1 to 265; that stretch reads MNTGGRLIAG…KSSKINPYRM (265 aa). The Zn(2+) site is built by Cys-39, Cys-42, Cys-58, Cys-61, Cys-66, Cys-69, Cys-81, and Cys-84. Residues 39 to 85 form an RING-type; degenerate zinc finger; that stretch reads CQICGDEIELSVDGESFVACNECAFPVCRPCYEYERREGNQSCPQCK. A phosphoserine mark is found at Ser-229 and Ser-230. The helical transmembrane segment at 266 to 286 threads the bilayer; it reads LIVLRLVILGLFFHYRILHPV. Topologically, residues 287-288 are extracellular; that stretch reads ND. The helical transmembrane segment at 289 to 309 threads the bilayer; the sequence is AYALWLISVICEIWFAVSWVL. The Cytoplasmic segment spans residues 310 to 853; that stretch reads DQFPKWYPIE…INSVVYPWTS (544 aa). Positions 348, 354, 355, and 384 each coordinate UDP-alpha-D-glucose. Asp-384 is an active-site residue. Residues 438-464 are a coiled coil; that stretch reads VRERRAMKRDYEEFKVKINALVATAQK. Position 525 (Lys-525) interacts with UDP-alpha-D-glucose. Mn(2+) contacts are provided by Lys-526 and Asp-550. Residue Asp-770 is part of the active site. The chain crosses the membrane as a helical span at residues 854 to 874; that stretch reads IPLLVYCSLPAICLLTGKFIV. Topologically, residues 875–879 are extracellular; the sequence is PEISN. A helical transmembrane segment spans residues 880–900; sequence YASILFMALFGSIAVTGILEM. At 901–915 the chain is on the cytoplasmic side; the sequence is QWGKVGIDDWWRNEQ. Residues 916 to 936 traverse the membrane as a helical segment; that stretch reads FWVIGGVSAHLFALFQGLLKV. Topologically, residues 937 to 965 are extracellular; it reads LAGVETNFTVTSKAADDGEFSELYIFKWT. N-linked (GlcNAc...) asparagine glycosylation is present at Asn-943. The helical transmembrane segment at 966 to 986 threads the bilayer; the sequence is SLLIPPTTLLIINVIGVIVGI. Residues 987 to 997 are Cytoplasmic-facing; the sequence is SDAISNGYDSW. A helical transmembrane segment spans residues 998 to 1018; it reads GPLFGRLFFAFWVILHLYPFL. Residues 1019–1027 lie on the Extracellular side of the membrane; the sequence is KGLLGKQDR. Residues 1028 to 1048 form a helical membrane-spanning segment; it reads MPTIILVWSILLASILTLLWV. Topologically, residues 1049–1069 are cytoplasmic; it reads RVNPFVAKGGPILEICGLDCL.

The protein belongs to the glycosyltransferase 2 family. Plant cellulose synthase subfamily. Zn(2+) serves as cofactor. It depends on Mn(2+) as a cofactor. As to expression, expressed in young plants, stems and flowers.

It is found in the cell membrane. The enzyme catalyses [(1-&gt;4)-beta-D-glucosyl](n) + UDP-alpha-D-glucose = [(1-&gt;4)-beta-D-glucosyl](n+1) + UDP + H(+). It participates in glycan metabolism; plant cellulose biosynthesis. Functionally, catalytic subunit of cellulose synthase terminal complexes ('rosettes'), required for beta-1,4-glucan microfibril crystallization, a major mechanism of the cell wall formation. The sequence is that of Cellulose synthase A catalytic subunit 5 [UDP-forming] from Arabidopsis thaliana (Mouse-ear cress).